The sequence spans 253 residues: 5'/3'-nucleotidase SurE (253 aa).

Asp8, Asp9, Ser39, and Asn92 together coordinate a divalent metal cation.

This sequence belongs to the SurE nucleotidase family. A divalent metal cation is required as a cofactor.

The protein resides in the cytoplasm. It carries out the reaction a ribonucleoside 5'-phosphate + H2O = a ribonucleoside + phosphate. The catalysed reaction is a ribonucleoside 3'-phosphate + H2O = a ribonucleoside + phosphate. The enzyme catalyses [phosphate](n) + H2O = [phosphate](n-1) + phosphate + H(+). Its function is as follows. Nucleotidase with a broad substrate specificity as it can dephosphorylate various ribo- and deoxyribonucleoside 5'-monophosphates and ribonucleoside 3'-monophosphates with highest affinity to 3'-AMP. Also hydrolyzes polyphosphate (exopolyphosphatase activity) with the preference for short-chain-length substrates (P20-25). Might be involved in the regulation of dNTP and NTP pools, and in the turnover of 3'-mononucleotides produced by numerous intracellular RNases (T1, T2, and F) during the degradation of various RNAs. The sequence is that of 5'/3'-nucleotidase SurE from Escherichia coli O7:K1 (strain IAI39 / ExPEC).